The chain runs to 409 residues: Imidazolonepropionase (409 aa).

Residues His-78 and His-80 each contribute to the Fe(3+) site. 2 residues coordinate Zn(2+): His-78 and His-80. Residues Arg-87, Tyr-150, and His-183 each contribute to the 4-imidazolone-5-propanoate site. N-formimidoyl-L-glutamate is bound at residue Tyr-150. Residue His-248 coordinates Fe(3+). Zn(2+) is bound at residue His-248. Gln-251 lines the 4-imidazolone-5-propanoate pocket. Asp-323 serves as a coordination point for Fe(3+). Asp-323 provides a ligand contact to Zn(2+). N-formimidoyl-L-glutamate contacts are provided by Asn-325 and Gly-327. Thr-328 contacts 4-imidazolone-5-propanoate.

It belongs to the metallo-dependent hydrolases superfamily. HutI family. Zn(2+) is required as a cofactor. Fe(3+) serves as cofactor.

It localises to the cytoplasm. It carries out the reaction 4-imidazolone-5-propanoate + H2O = N-formimidoyl-L-glutamate. Its pathway is amino-acid degradation; L-histidine degradation into L-glutamate; N-formimidoyl-L-glutamate from L-histidine: step 3/3. Catalyzes the hydrolytic cleavage of the carbon-nitrogen bond in imidazolone-5-propanoate to yield N-formimidoyl-L-glutamate. It is the third step in the universal histidine degradation pathway. This Mesorhizobium japonicum (strain LMG 29417 / CECT 9101 / MAFF 303099) (Mesorhizobium loti (strain MAFF 303099)) protein is Imidazolonepropionase.